A 348-amino-acid chain; its full sequence is Chlorophyll(ide) b reductase NOL, chloroplastic (348 aa).

A chloroplast-targeting transit peptide spans 1 to 61; that stretch reads MATWSGFNVS…TRQNLTVTPS (61 aa). Residue 84 to 108 participates in NAD(+) binding; the sequence is ITGSTKGIGYALAREFLKAGDNVVI. The active-site Proton acceptor is tyrosine 233.

This sequence belongs to the short-chain dehydrogenases/reductases (SDR) family. In terms of assembly, interacts with NCY1 to form a complex that acts as a chlorophyll b reductase. Interacts with HCAR, RCCR and the LHCII complex. Part of a SGR1-CCE-LHCII complex, which acts in chlorophyll breakdown.

The protein resides in the plastid. The protein localises to the chloroplast thylakoid membrane. The catalysed reaction is 7(1)-hydroxychlorophyllide a + NAD(+) = chlorophyllide b + NADH + H(+). It carries out the reaction 7(1)-hydroxychlorophyllide a + NADP(+) = chlorophyllide b + NADPH + H(+). Required for chlorophyll b degradation. Chlorophyll b, chlorophyllide b, pheophorbide b and pheophytin b can be used as substrates. Belongs to the chlorophyll catabolic enzymes (CCEs). The polypeptide is Chlorophyll(ide) b reductase NOL, chloroplastic (NOL) (Arabidopsis thaliana (Mouse-ear cress)).